The primary structure comprises 239 residues: Ribosomal RNA large subunit methyltransferase E (239 aa).

The disordered stretch occupies residues 1–20 (MTKAPIAGNRTGRKLGQRVK). Residues 11-20 (TGRKLGQRVK) are compositionally biased toward basic residues. 5 residues coordinate S-adenosyl-L-methionine: G81, W83, D104, D120, and D144. The Proton acceptor role is filled by K184.

Belongs to the class I-like SAM-binding methyltransferase superfamily. RNA methyltransferase RlmE family.

The protein localises to the cytoplasm. It carries out the reaction uridine(2552) in 23S rRNA + S-adenosyl-L-methionine = 2'-O-methyluridine(2552) in 23S rRNA + S-adenosyl-L-homocysteine + H(+). In terms of biological role, specifically methylates the uridine in position 2552 of 23S rRNA at the 2'-O position of the ribose in the fully assembled 50S ribosomal subunit. This chain is Ribosomal RNA large subunit methyltransferase E, found in Rhizobium johnstonii (strain DSM 114642 / LMG 32736 / 3841) (Rhizobium leguminosarum bv. viciae).